The sequence spans 191 residues: Molybdenum cofactor guanylyltransferase (191 aa).

Residues 11–13 (LCG), Lys23, Asp66, and Asp97 contribute to the GTP site. Asp97 lines the Mg(2+) pocket.

The protein belongs to the MobA family. Monomer. It depends on Mg(2+) as a cofactor.

The protein resides in the cytoplasm. The enzyme catalyses Mo-molybdopterin + GTP + H(+) = Mo-molybdopterin guanine dinucleotide + diphosphate. Transfers a GMP moiety from GTP to Mo-molybdopterin (Mo-MPT) cofactor (Moco or molybdenum cofactor) to form Mo-molybdopterin guanine dinucleotide (Mo-MGD) cofactor. The protein is Molybdenum cofactor guanylyltransferase of Campylobacter jejuni subsp. doylei (strain ATCC BAA-1458 / RM4099 / 269.97).